Consider the following 394-residue polypeptide: Glutamyl-tRNA reductase (394 aa).

Substrate contacts are provided by residues 45-48 (TCNR), Ser99, 104-106 (EEQ), and Gln110. The active-site Nucleophile is Cys46. An NADP(+)-binding site is contributed by 175–180 (GLGNIG).

It belongs to the glutamyl-tRNA reductase family. Homodimer.

It carries out the reaction (S)-4-amino-5-oxopentanoate + tRNA(Glu) + NADP(+) = L-glutamyl-tRNA(Glu) + NADPH + H(+). The protein operates within porphyrin-containing compound metabolism; protoporphyrin-IX biosynthesis; 5-aminolevulinate from L-glutamyl-tRNA(Glu): step 1/2. In terms of biological role, catalyzes the NADPH-dependent reduction of glutamyl-tRNA(Glu) to glutamate 1-semialdehyde (GSA). The chain is Glutamyl-tRNA reductase from Caldicellulosiruptor saccharolyticus (strain ATCC 43494 / DSM 8903 / Tp8T 6331).